We begin with the raw amino-acid sequence, 434 residues long: Chaperone SurA (434 aa).

A signal peptide spans 1 to 22 (MKPSKHLIFALFALAISQPTMA). PpiC domains follow at residues 173-274 (DVEY…KIMD) and 283-383 (IEEV…QLEE).

The protein resides in the periplasm. It carries out the reaction [protein]-peptidylproline (omega=180) = [protein]-peptidylproline (omega=0). Its function is as follows. Chaperone involved in the correct folding and assembly of outer membrane proteins. Recognizes specific patterns of aromatic residues and the orientation of their side chains, which are found more frequently in integral outer membrane proteins. May act in both early periplasmic and late outer membrane-associated steps of protein maturation. This Shewanella sp. (strain MR-7) protein is Chaperone SurA.